A 266-amino-acid polypeptide reads, in one-letter code: Undecaprenyl-diphosphatase (266 aa).

Helical transmembrane passes span 1–21, 43–63, 83–103, 114–134, 144–164, 186–206, 219–239, and 245–265; these read MNIFQTIVLALVQGLSEFLPI, FDVVVHMGTLSAVIFYYQAMI, SKLAWGVLLGTIPVGLVGMIF, VEIIAYATLVFGVLLGFASWF, TISWVDIGFIGMAQTLALIPG, IQFAFLLSIPVISLSLILILI, LLAMGFVVAAISAYVTIVFFI, and VGMMPFVIYRLTLGIFLFFFI.

It belongs to the UppP family.

The protein resides in the cell inner membrane. The catalysed reaction is di-trans,octa-cis-undecaprenyl diphosphate + H2O = di-trans,octa-cis-undecaprenyl phosphate + phosphate + H(+). Catalyzes the dephosphorylation of undecaprenyl diphosphate (UPP). Confers resistance to bacitracin. The chain is Undecaprenyl-diphosphatase from Ruthia magnifica subsp. Calyptogena magnifica.